We begin with the raw amino-acid sequence, 206 residues long: dCTP deaminase, dUMP-forming (206 aa).

Residues 117–122 (RSSFGR), D135, 143–145 (TLE), Q163, Y177, K184, and Q188 each bind dCTP. E145 acts as the Proton donor/acceptor in catalysis.

The protein belongs to the dCTP deaminase family. In terms of assembly, homotrimer.

The catalysed reaction is dCTP + 2 H2O = dUMP + NH4(+) + diphosphate. Its pathway is pyrimidine metabolism; dUMP biosynthesis; dUMP from dCTP: step 1/1. Its function is as follows. Bifunctional enzyme that catalyzes both the deamination of dCTP to dUTP and the hydrolysis of dUTP to dUMP without releasing the toxic dUTP intermediate. This chain is dCTP deaminase, dUMP-forming, found in Methanococcus maripaludis (strain DSM 14266 / JCM 13030 / NBRC 101832 / S2 / LL).